The primary structure comprises 138 residues: Ribosome-binding factor A (138 aa).

The interval 117–138 (AEDGQHQEGPASADAKPESTEE) is disordered.

This sequence belongs to the RbfA family. In terms of assembly, monomer. Binds 30S ribosomal subunits, but not 50S ribosomal subunits or 70S ribosomes.

It is found in the cytoplasm. In terms of biological role, one of several proteins that assist in the late maturation steps of the functional core of the 30S ribosomal subunit. Associates with free 30S ribosomal subunits (but not with 30S subunits that are part of 70S ribosomes or polysomes). Required for efficient processing of 16S rRNA. May interact with the 5'-terminal helix region of 16S rRNA. This Pseudomonas syringae pv. syringae (strain B728a) protein is Ribosome-binding factor A.